Here is a 193-residue protein sequence, read N- to C-terminus: uncharacterized protein (193 aa).

Residues 1-22 (MAVQKNVIKGILAGTFALMLSG) form the signal peptide. Cys-23 carries the N-palmitoyl cysteine lipid modification. Cys-23 carries the S-diacylglycerol cysteine lipid modification.

It localises to the cell membrane. This is an uncharacterized protein from Escherichia coli (strain K12).